Reading from the N-terminus, the 396-residue chain is Elongation factor Tu (396 aa).

The tr-type G domain maps to 10 to 206; sequence KPHVNVGTIG…ALDTYIPTPE (197 aa). The interval 19-26 is G1; it reads GHVDHGKT. 19–26 provides a ligand contact to GTP; it reads GHVDHGKT. Residue Thr-26 coordinates Mg(2+). Residues 60–64 form a G2 region; the sequence is GITIN. The interval 81–84 is G3; the sequence is DCPG. Residues 81–85 and 136–139 contribute to the GTP site; these read DCPGH and NKCD. The segment at 136 to 139 is G4; sequence NKCD. The tract at residues 174-176 is G5; it reads SAK.

Belongs to the TRAFAC class translation factor GTPase superfamily. Classic translation factor GTPase family. EF-Tu/EF-1A subfamily. Monomer.

It localises to the cytoplasm. The enzyme catalyses GTP + H2O = GDP + phosphate + H(+). In terms of biological role, GTP hydrolase that promotes the GTP-dependent binding of aminoacyl-tRNA to the A-site of ribosomes during protein biosynthesis. This chain is Elongation factor Tu, found in Burkholderia mallei (strain NCTC 10247).